Consider the following 430-residue polypeptide: tRNA(Ile)-lysidine synthase (430 aa).

27–32 is a binding site for ATP; sequence SGGSDS.

It belongs to the tRNA(Ile)-lysidine synthase family.

The protein resides in the cytoplasm. It carries out the reaction cytidine(34) in tRNA(Ile2) + L-lysine + ATP = lysidine(34) in tRNA(Ile2) + AMP + diphosphate + H(+). In terms of biological role, ligates lysine onto the cytidine present at position 34 of the AUA codon-specific tRNA(Ile) that contains the anticodon CAU, in an ATP-dependent manner. Cytidine is converted to lysidine, thus changing the amino acid specificity of the tRNA from methionine to isoleucine. The protein is tRNA(Ile)-lysidine synthase of Rickettsia bellii (strain RML369-C).